Reading from the N-terminus, the 123-residue chain is Thioredoxin domain-containing protein 17 (123 aa).

The Thioredoxin domain maps to 41–123 (SWCPDCVTAE…DLVRMMFTED (83 aa)). Catalysis depends on nucleophile residues C43 and C46. A disulfide bridge links C43 with C46.

This sequence belongs to the thioredoxin family. As to expression, predominantly expressed in liver, brain and muscle. Also expressed in kidney, intestine, skin, stomach, gill and head kidney.

The protein resides in the cytoplasm. Disulfide reductase. May participate in various redox reactions through the reversible oxidation of its active center dithiol to a disulfide and catalyze dithiol-disulfide exchange reactions. Has peroxidase activity and may contribute to the elimination of cellular hydrogen peroxide. May function as an antioxidant involved in response to viral infection. The chain is Thioredoxin domain-containing protein 17 from Epinephelus coioides (Orange-spotted grouper).